We begin with the raw amino-acid sequence, 633 residues long: Sodium- and chloride-dependent glycine transporter 1 (633 aa).

Residues 1 to 30 lie on the Cytoplasmic side of the membrane; sequence MGLCVNGAVPSEATKKDENLKRGNWGNQIE. A run of 3 helical transmembrane segments spans residues 31–51, 58–78, and 113–133; these read FVLTSVGYAVGLGNVWRFPYL, GAFMFPYFIMLIFCGIPLFFM, and YIGIYYNVVICIAFYYFFASM. The Extracellular portion of the chain corresponds to 134–208; the sequence is NRVLPWTYCN…ISEDIGDFGE (75 aa). Residues N158, N164, N173, and N179 are each glycosylated (N-linked (GlcNAc...) asparagine). A run of 9 helical transmembrane segments spans residues 209–229, 238–258, 283–303, 330–350, 373–393, 429–449, 453–473, 493–513, and 533–553; these read VQLPLLGCLGVSWLVVFLCLI, VVYFTATFPYVVLTILFIRGI, VWGDAASQIFYSLGCAWGGLI, SVYAGFVIFSILGFMATHLGV, LLPISPLWSILFFFMLILLGL, IIGFLLGIPLTTQAGIYWLLL, YAASFSLVIISCIMCIAVMYI, LFFQICWRFISPGIIFFILIF, and ITIGFLMALSSVICIPLYAIF. Residues 554–633 lie on the Cytoplasmic side of the membrane; the sequence is KIWCSEGDTF…GQAHTQDSKV (80 aa). The interval 588-633 is disordered; it reads RYAQMSSTRSESNPEAQPLNPEKMKEDLSLTIQGSNGQAHTQDSKV. Composition is skewed to polar residues over residues 591-602 and 617-633; these read QMSSTRSESNPE and LTIQGSNGQAHTQDSKV.

This sequence belongs to the sodium:neurotransmitter symporter (SNF) (TC 2.A.22) family. SLC6A9 subfamily. In terms of tissue distribution, first expressed in early tailbud stage embryos in the midbrain and anterior spinal cord, and weakly in the hindbrain. By late tailbud stages, expression extends posteriorly in the spinal cord to appear in between somites. Expressed in the forebrain, retina, between the somites and in the blood islands by the swimming tadpole stages.

Its subcellular location is the cell membrane. It catalyses the reaction glycine(out) + chloride(out) + 2 Na(+)(out) = glycine(in) + chloride(in) + 2 Na(+)(in). Its function is as follows. Sodium- and chloride-dependent glycine transporter which is essential for regulating glycine concentrations at inhibitory glycinergic synapses. This is Sodium- and chloride-dependent glycine transporter 1 from Xenopus laevis (African clawed frog).